The chain runs to 136 residues: Cytidine deaminase (136 aa).

The 128-residue stretch at 1-128 (MDVEKLIAES…KLLPGAFSKE (128 aa)) folds into the CMP/dCMP-type deaminase domain. 42–44 (NIE) lines the substrate pocket. Residue cysteine 53 participates in Zn(2+) binding. The active-site Proton donor is the glutamate 55. Zn(2+) contacts are provided by cysteine 86 and cysteine 89.

This sequence belongs to the cytidine and deoxycytidylate deaminase family. The cofactor is Zn(2+).

It catalyses the reaction cytidine + H2O + H(+) = uridine + NH4(+). The catalysed reaction is 2'-deoxycytidine + H2O + H(+) = 2'-deoxyuridine + NH4(+). Its function is as follows. This enzyme scavenges exogenous and endogenous cytidine and 2'-deoxycytidine for UMP synthesis. This chain is Cytidine deaminase (cdd), found in Sporosarcina psychrophila (Bacillus psychrophilus).